Consider the following 116-residue polypeptide: Large ribosomal subunit protein bL20 (116 aa).

This sequence belongs to the bacterial ribosomal protein bL20 family.

Functionally, binds directly to 23S ribosomal RNA and is necessary for the in vitro assembly process of the 50S ribosomal subunit. It is not involved in the protein synthesizing functions of that subunit. This Helicobacter pylori (strain HPAG1) protein is Large ribosomal subunit protein bL20.